Reading from the N-terminus, the 152-residue chain is MIGRIIRLYRKRKGYSINQLAVESGVSKSYLSKIERGVHTNPSVQFLKKVSATLEVELTELFDAETMMYEKISGGEEEWRVHLVQAVQAGMEKEELFTFTNRLKKEQPETASYRNRKLTESNIEEWKALMAEAREIGLSVHEVKSFLKTKGR.

The HTH cro/C1-type domain maps to 6–61; that stretch reads IRLYRKRKGYSINQLAVESGVSKSYLSKIERGVHTNPSVQFLKKVSATLEVELTEL. The segment at residues 17-36 is a DNA-binding region (H-T-H motif); sequence INQLAVESGVSKSYLSKIER. One can recognise a Sin domain in the interval 113–151; the sequence is YRNRKLTESNIEEWKALMAEAREIGLSVHEVKSFLKTKG.

In terms of assembly, component of the SlrR/SlrA complex.

In terms of biological role, represses sigma(D)-dependent flagellar genes and activate the eps and yqxM operons. Repressor activity is regulated by SlrA. Controls the initiation of biofilm formation. The polypeptide is HTH-type transcriptional regulator SlrR (slrR) (Bacillus subtilis (strain 168)).